A 91-amino-acid chain; its full sequence is Small ribosomal subunit protein bS18 (91 aa).

This sequence belongs to the bacterial ribosomal protein bS18 family. As to quaternary structure, part of the 30S ribosomal subunit. Forms a tight heterodimer with protein bS6.

Functionally, binds as a heterodimer with protein bS6 to the central domain of the 16S rRNA, where it helps stabilize the platform of the 30S subunit. The protein is Small ribosomal subunit protein bS18 of Wolbachia sp. subsp. Brugia malayi (strain TRS).